We begin with the raw amino-acid sequence, 235 residues long: MAEKVNNFPPLPKFIPLKPCFYQDFEADIPPQHLSLTKRLYYLWMLNSVTLAVNLVGCLAWLIGGGGATNFGLAFLWLILFTPCSYVCWFRPIYKAFKTDSSFSFMAFFFTFMAQLVISIIQAVGIPGWGVCGWIATISFFGTNIGSAVVMLIPTVMFTVVAVFSFIALSMVHKFYRGSGGSFSKAQEEWTTGAWKNPHVQQAAQNAAMGAAQGAMNQPQTQYSTTPNYTYSNEM.

Residues 1 to 39 (MAEKVNNFPPLPKFIPLKPCFYQDFEADIPPQHLSLTKR) lie on the Cytoplasmic side of the membrane. Residues 40 to 60 (LYYLWMLNSVTLAVNLVGCLA) form a helical membrane-spanning segment. Over 61–67 (WLIGGGG) the chain is Extracellular. A helical membrane pass occupies residues 68–88 (ATNFGLAFLWLILFTPCSYVC). The Cytoplasmic segment spans residues 89 to 102 (WFRPIYKAFKTDSS). A helical membrane pass occupies residues 103-125 (FSFMAFFFTFMAQLVISIIQAVG). Residues 126 to 148 (IPGWGVCGWIATISFFGTNIGSA) lie on the Extracellular side of the membrane. Residues 149-169 (VVMLIPTVMFTVVAVFSFIAL) form a helical membrane-spanning segment. Residues 170-235 (SMVHKFYRGS…TPNYTYSNEM (66 aa)) lie on the Cytoplasmic side of the membrane.

Belongs to the SCAMP family. SCAMP5 subfamily. In terms of assembly, interacts (via C-terminal part) with SYT1 and SYT2; interaction with synaptotagmins making a link with the SNARE molecules. Interacts with SLC9A7.

Its subcellular location is the cell membrane. It localises to the golgi apparatus membrane. It is found in the golgi apparatus. The protein resides in the trans-Golgi network membrane. The protein localises to the recycling endosome membrane. Its subcellular location is the cytoplasmic vesicle. It localises to the secretory vesicle. It is found in the synaptic vesicle membrane. Functionally, required for the calcium-dependent exocytosis of signal sequence-containing cytokines such as CCL5. Probably acts in cooperation with the SNARE machinery. This Rattus norvegicus (Rat) protein is Secretory carrier-associated membrane protein 5 (Scamp5).